The primary structure comprises 348 residues: Signal recognition particle receptor FtsY (348 aa).

GTP-binding positions include 143–150 (GVNGVGKT), 225–229 (DTSGR), and 289–292 (TKMD).

The protein belongs to the GTP-binding SRP family. FtsY subfamily. In terms of assembly, part of the signal recognition particle protein translocation system, which is composed of SRP and FtsY.

Its subcellular location is the cell membrane. It localises to the cytoplasm. It catalyses the reaction GTP + H2O = GDP + phosphate + H(+). Its function is as follows. Involved in targeting and insertion of nascent membrane proteins into the cytoplasmic membrane. Acts as a receptor for the complex formed by the signal recognition particle (SRP) and the ribosome-nascent chain (RNC). The chain is Signal recognition particle receptor FtsY from Mycoplasma pneumoniae (strain ATCC 29342 / M129 / Subtype 1) (Mycoplasmoides pneumoniae).